A 147-amino-acid chain; its full sequence is Nucleoside diphosphate kinase (147 aa).

Lys-9, Phe-57, Arg-85, Thr-91, Arg-102, and Asn-112 together coordinate ATP. The active-site Pros-phosphohistidine intermediate is the His-115.

This sequence belongs to the NDK family. It depends on Mg(2+) as a cofactor.

It is found in the cytoplasm. It carries out the reaction a 2'-deoxyribonucleoside 5'-diphosphate + ATP = a 2'-deoxyribonucleoside 5'-triphosphate + ADP. The catalysed reaction is a ribonucleoside 5'-diphosphate + ATP = a ribonucleoside 5'-triphosphate + ADP. Functionally, major role in the synthesis of nucleoside triphosphates other than ATP. The ATP gamma phosphate is transferred to the NDP beta phosphate via a ping-pong mechanism, using a phosphorylated active-site intermediate. In Thermoplasma volcanium (strain ATCC 51530 / DSM 4299 / JCM 9571 / NBRC 15438 / GSS1), this protein is Nucleoside diphosphate kinase.